We begin with the raw amino-acid sequence, 428 residues long: Adenylosuccinate synthetase (428 aa).

Residues 12–18 and 40–42 contribute to the GTP site; these read GDEGKGK and GHT. Asp13 (proton acceptor) is an active-site residue. Asp13 and Gly40 together coordinate Mg(2+). IMP contacts are provided by residues 13-16, 38-41, Thr128, Arg142, Gln222, Thr237, and Arg301; these read DEGK and NAGH. The active-site Proton donor is His41. 297–303 provides a ligand contact to substrate; it reads TVTGRSR. Residues Arg303, 329-331, and 411-413 each bind GTP; these read KLD and STS.

The protein belongs to the adenylosuccinate synthetase family. As to quaternary structure, homodimer. Requires Mg(2+) as cofactor.

The protein resides in the cytoplasm. It carries out the reaction IMP + L-aspartate + GTP = N(6)-(1,2-dicarboxyethyl)-AMP + GDP + phosphate + 2 H(+). It participates in purine metabolism; AMP biosynthesis via de novo pathway; AMP from IMP: step 1/2. Plays an important role in the de novo pathway of purine nucleotide biosynthesis. Catalyzes the first committed step in the biosynthesis of AMP from IMP. The polypeptide is Adenylosuccinate synthetase (Phenylobacterium zucineum (strain HLK1)).